Consider the following 513-residue polypeptide: L-aspartate oxidase (513 aa).

FAD contacts are provided by residues 17-20 and 46-53; these read AGIA and SSILAQGG. The Proton donor/acceptor role is filled by arginine 278. FAD contacts are provided by residues glutamate 361 and 377-378; that span reads SL.

This sequence belongs to the FAD-dependent oxidoreductase 2 family. NadB subfamily. FAD is required as a cofactor.

Its subcellular location is the cytoplasm. The catalysed reaction is L-aspartate + O2 = iminosuccinate + H2O2. It functions in the pathway cofactor biosynthesis; NAD(+) biosynthesis; iminoaspartate from L-aspartate (oxidase route): step 1/1. Catalyzes the oxidation of L-aspartate to iminoaspartate, the first step in the de novo biosynthesis of NAD(+). The protein is L-aspartate oxidase (nadB) of Mesorhizobium japonicum (strain LMG 29417 / CECT 9101 / MAFF 303099) (Mesorhizobium loti (strain MAFF 303099)).